Consider the following 587-residue polypeptide: 5-aminolevulinate synthase, erythroid-specific, mitochondrial (587 aa).

A mitochondrion-targeting transit peptide spans 1-49; the sequence is MVTAAMLLQCCPVPARGPTSLLGKVVKTHQFLFGIGRCPILATQGPNCS. Arg-163 provides a ligand contact to succinyl-CoA. 2 residues coordinate pyridoxal 5'-phosphate: Cys-258 and Phe-259. The succinyl-CoA site is built by Ser-280 and Lys-299. Pyridoxal 5'-phosphate is bound by residues Ser-332, His-360, and Thr-388. Lys-391 is a catalytic residue. An N6-(pyridoxal phosphate)lysine modification is found at Lys-391. Pyridoxal 5'-phosphate-binding residues include Thr-420 and Thr-421. Residue Thr-508 coordinates succinyl-CoA.

This sequence belongs to the class-II pyridoxal-phosphate-dependent aminotransferase family. In terms of assembly, homodimer. Interacts with SUCLA2. Pyridoxal 5'-phosphate serves as cofactor.

The protein localises to the mitochondrion inner membrane. The enzyme catalyses succinyl-CoA + glycine + H(+) = 5-aminolevulinate + CO2 + CoA. It functions in the pathway porphyrin-containing compound metabolism; protoporphyrin-IX biosynthesis; 5-aminolevulinate from glycine: step 1/1. In terms of biological role, catalyzes the pyridoxal 5'-phosphate (PLP)-dependent condensation of succinyl-CoA and glycine to form aminolevulinic acid (ALA), with CoA and CO2 as by-products. Contributes significantly to heme formation during erythropoiesis. The polypeptide is 5-aminolevulinate synthase, erythroid-specific, mitochondrial (ALAS2) (Pongo abelii (Sumatran orangutan)).